The following is a 175-amino-acid chain: Large ribosomal subunit protein uL10 (175 aa).

This sequence belongs to the universal ribosomal protein uL10 family. As to quaternary structure, part of the ribosomal stalk of the 50S ribosomal subunit. The N-terminus interacts with L11 and the large rRNA to form the base of the stalk. The C-terminus forms an elongated spine to which L12 dimers bind in a sequential fashion forming a multimeric L10(L12)X complex.

Its function is as follows. Forms part of the ribosomal stalk, playing a central role in the interaction of the ribosome with GTP-bound translation factors. The protein is Large ribosomal subunit protein uL10 of Xylella fastidiosa (strain M12).